Consider the following 363-residue polypeptide: Large ribosomal subunit protein uL4B (363 aa).

Residues 280-363 are C-terminal-extended nuclear localization signal; that stretch reads PENIISNADV…EKFLSVLHEN (84 aa).

This sequence belongs to the universal ribosomal protein uL4 family. In terms of assembly, component of the large ribosomal subunit (LSU). Mature yeast ribosomes consist of a small (40S) and a large (60S) subunit. The 40S small subunit contains 1 molecule of ribosomal RNA (18S rRNA) and at least 33 different proteins. The large 60S subunit contains 3 rRNA molecules (25S, 5.8S and 5S rRNA) and at least 46 different proteins. uL4 is associated with the polypeptide exit tunnel. uL4 interacts with its chaperone ACL4 and the nuclear import receptor KAP104.

It is found in the cytoplasm. Component of the ribosome, a large ribonucleoprotein complex responsible for the synthesis of proteins in the cell. The small ribosomal subunit (SSU) binds messenger RNAs (mRNAs) and translates the encoded message by selecting cognate aminoacyl-transfer RNA (tRNA) molecules. The large subunit (LSU) contains the ribosomal catalytic site termed the peptidyl transferase center (PTC), which catalyzes the formation of peptide bonds, thereby polymerizing the amino acids delivered by tRNAs into a polypeptide chain. The nascent polypeptides leave the ribosome through a tunnel in the LSU and interact with protein factors that function in enzymatic processing, targeting, and the membrane insertion of nascent chains at the exit of the ribosomal tunnel. The chain is Large ribosomal subunit protein uL4B (rpl401) from Schizosaccharomyces pombe (strain 972 / ATCC 24843) (Fission yeast).